The following is a 198-amino-acid chain: Linker for activation of T-cells family member 2 (198 aa).

Topologically, residues 1-4 (MAQP) are extracellular. A helical; Signal-anchor for type III membrane protein transmembrane segment spans residues 5 to 24 (ELLWAAAGLMLLGVAVSACV). S-palmitoyl cysteine attachment occurs at residues Cys23 and Cys26. Residues 25–198 (RCQLYATKRG…PTIDAVVLSK (174 aa)) lie on the Cytoplasmic side of the membrane. 3 positions are modified to phosphotyrosine: Tyr136, Tyr155, and Tyr184.

As to quaternary structure, when phosphorylated, interacts with GRB2. Post-translationally, phosphorylated on tyrosines following cross-linking of BCR; which induces the recruitment of GRB2.

It localises to the cell membrane. In terms of biological role, involved in BCR (B-cell antigen receptor)-mediated signaling in B-cells. May also be involved in FCER1 (high affinity immunoglobulin epsilon receptor)-mediated signaling in mast cells and FCGR1 (high affinity immunoglobulin gamma Fc receptor I)-mediated signaling in myeloid cells. Couples activation of these receptors and their associated kinases with distal intracellular events such as calcium mobilization through the recruitment of GRB2. In Gallus gallus (Chicken), this protein is Linker for activation of T-cells family member 2 (LAT2).